A 211-amino-acid polypeptide reads, in one-letter code: Metalloproteinase inhibitor 3 (211 aa).

The signal sequence occupies residues 1-23 (MTPWLGLIVLLGSWSLGDWGAEA). Position 24 (cysteine 24) interacts with Zn(2+). Involved in metalloproteinase-binding stretches follow at residues 24–27 (CTCS) and 88–89 (ES). Intrachain disulfides connect cysteine 24/cysteine 91, cysteine 26/cysteine 118, cysteine 36/cysteine 143, cysteine 145/cysteine 192, cysteine 150/cysteine 155, and cysteine 163/cysteine 184. An NTR domain is found at 24 to 143 (CTCSPSHPQD…GLNYRYHLGC (120 aa)). Residues 105 to 188 (TGRVYDGKMY…SKHYACIRQK (84 aa)) form a mediates interaction with EFEMP1 region. Asparagine 207 carries N-linked (GlcNAc...) asparagine glycosylation.

It belongs to the protease inhibitor I35 (TIMP) family. In terms of assembly, interacts with EFEMP1. Interacts with KDR.

It localises to the secreted. The protein resides in the extracellular space. The protein localises to the extracellular matrix. Mediates a variety of processes including matrix regulation and turnover, inflammation, and angiogenesis, through reversible inhibition of zinc protease superfamily enzymes, primarily matrix metalloproteinases (MMPs). Regulates extracellular matrix (ECM) remodeling through inhibition of matrix metalloproteinases (MMP) including MMP-1, MMP-2, MMP-3, MMP-7, MMP-9, MMP-13, MMP-14 and MMP-15. Additionally, modulates the processing of amyloid precursor protein (APP) and apolipoprotein E receptor ApoER2 by inhibiting two alpha-secretases ADAM10 and ADAM17. Functions as a tumor suppressor and a potent inhibitor of angiogenesis. Exerts its anti-angiogenic effect by directly interacting with vascular endothelial growth factor (VEGF) receptor-2/KDR, preventing its binding to the VEGFA ligand. Selectively induces apoptosis in angiogenic endothelial cells through a caspase-independent cell death pathway. Mechanistically, inhibits matrix-induced focal adhesion kinase PTK2 tyrosine phosphorylation and association with paxillin/PXN and disrupts the incorporation of ITGB3, PTK2 and PXN into focal adhesion contacts on the matrix. The polypeptide is Metalloproteinase inhibitor 3 (TIMP3) (Macaca mulatta (Rhesus macaque)).